We begin with the raw amino-acid sequence, 112 residues long: MAEDIEEIRRKKLLELQKKLAEQKRAEEEQIRQEMELEAQLQAIMKQILTSEARERLTRVKLVRPELARQVELILVQLYQAGQITERITDEKLKRILAQIDARTRKEFRIKW.

It belongs to the PDCD5 family.

The protein is DNA-binding protein TSIB_0525 of Thermococcus sibiricus (strain DSM 12597 / MM 739).